Reading from the N-terminus, the 182-residue chain is Adenine phosphoribosyltransferase 4 (182 aa).

It belongs to the purine/pyrimidine phosphoribosyltransferase family. As to quaternary structure, homodimer.

It localises to the cytoplasm. The catalysed reaction is AMP + diphosphate = 5-phospho-alpha-D-ribose 1-diphosphate + adenine. Its pathway is purine metabolism; AMP biosynthesis via salvage pathway; AMP from adenine: step 1/1. In terms of biological role, catalyzes a salvage reaction resulting in the formation of AMP, that is energically less costly than de novo synthesis. May contribute to the recycling of adenine into adenylate nucleotides and the inactivation of cytokinins by phosphoribosylation. Possesses low activity toward adenine, but can efficiently convert cytokinins from free bases (active form) to the corresponding nucleotides (inactive form). The chain is Adenine phosphoribosyltransferase 4 (APT4) from Arabidopsis thaliana (Mouse-ear cress).